Here is a 213-residue protein sequence, read N- to C-terminus: KHG/KDPG aldolase (213 aa).

Glu45 serves as the catalytic Proton acceptor. 3 residues coordinate pyruvate: Arg49, Thr73, and Lys133. The Schiff-base intermediate with substrate role is filled by Lys133.

The protein belongs to the KHG/KDPG aldolase family. In terms of assembly, homotrimer.

It localises to the cytoplasm. The enzyme catalyses 2-dehydro-3-deoxy-6-phospho-D-gluconate = D-glyceraldehyde 3-phosphate + pyruvate. It catalyses the reaction (4S)-4-hydroxy-2-oxoglutarate = glyoxylate + pyruvate. Its pathway is carbohydrate acid metabolism; 2-dehydro-3-deoxy-D-gluconate degradation; D-glyceraldehyde 3-phosphate and pyruvate from 2-dehydro-3-deoxy-D-gluconate: step 2/2. It participates in carbohydrate metabolism; glyoxylate and dicarboxylate metabolism. Its function is as follows. Involved in the degradation of glucose via the Entner-Doudoroff pathway. Catalyzes the reversible, stereospecific retro-aldol cleavage of 2-keto-3-deoxy-6-phosphogluconate (KDPG) to pyruvate and D-glyceraldehyde-3-phosphate. In addition to its KDPG aldolase activity, catalyzes the reversible cleavage of 2-keto-4-hydroxyglutarate (KHG) to glyoxylate and pyruvate. The enzyme is stereoselective for the S-enantiomer of KHG. Cleavage of KHG could serve in tricarboxylic acid (TCA) cycle regulation or, when operating in the reverse direction, in the detoxification of glyoxylate. This chain is KHG/KDPG aldolase (eda), found in Escherichia coli O157:H7.